A 420-amino-acid chain; its full sequence is Vacuolar amino acid transporter 5 (420 aa).

The Cytoplasmic portion of the chain corresponds to 1–19 (MSGYSPLSSGPADVHIGKA). A helical membrane pass occupies residues 20–40 (GFFSSVINLANTILGAGILSL). At 41-49 (PNAFTKTGL) the chain is on the vacuolar side. The helical transmembrane segment at 50–70 (LFGCLTIVFSAFASFLGLYFV) threads the bilayer. At 71-96 (SQCAARLPRGKASFAAVAKHTFPSLA) the chain is on the cytoplasmic side. A helical membrane pass occupies residues 97–117 (VVFDASIAVKCFGVAVSYLVI). The Vacuolar portion of the chain corresponds to 118–141 (VGDLMPQIAPSLGLSSPMFLRRQT). A helical transmembrane segment spans residues 142–162 (WIVFALFVLTPLSFLKRLDSL). Over 163–166 (RHTS) the chain is Cytoplasmic. A helical membrane pass occupies residues 167–187 (VISLIALCYLVFIVLYHFIIG). Topologically, residues 188-195 (DTVKGEIR) are vacuolar. Residues 196–216 (YFVPESGFGYLSVLPVFVFGF) traverse the membrane as a helical segment. Residues 217–240 (TCHQNAFSVINEVRNFSQGFVNFT) are Cytoplasmic-facing. A helical membrane pass occupies residues 241-261 (MFTAIISSTLLYLLVAITGYL). Over 262-278 (SFGSLASGNIIAMYDNT) the chain is Vacuolar. The helical transmembrane segment at 279-299 (SIWIIGGKLAIVVLVLFSYPL) threads the bilayer. Topologically, residues 300 to 326 (QCHPCRNSVYQAIRRSYSAHDMSDGYH) are cytoplasmic. The chain crosses the membrane as a helical span at residues 327–347 (AVITLCILLFTHSLALLLSSL). Residues 348 to 349 (EM) lie on the Vacuolar side of the membrane. A helical membrane pass occupies residues 350–370 (VLAFVGSTGSTFISFILPGSL). The Cytoplasmic portion of the chain corresponds to 371-394 (YYFFSHKVASPGNSSPLQLRISRA). Residues 395-415 (FAAGLAIYGTVVMILCLNINI) traverse the membrane as a helical segment. Over 416-420 (AKLSH) the chain is Vacuolar.

This sequence belongs to the amino acid/polyamine transporter 2 family.

The protein localises to the vacuole membrane. Functionally, vacuolar amino acid transporter involved in the vacuolar uptake of histidine, glutamate, tyrosine, arginine, lysine, and serine. Required for sporulation. This is Vacuolar amino acid transporter 5 (avt5) from Schizosaccharomyces pombe (strain 972 / ATCC 24843) (Fission yeast).